A 612-amino-acid polypeptide reads, in one-letter code: Poly(A) RNA polymerase, mitochondrial (612 aa).

A mitochondrion-targeting transit peptide spans 1–57 (MNSLVRRSAQQLSLWRTYCIKHNASEAASPGRNAGRPNYEEFIGRHQRQAQCSIVVQ). ATP is bound by residues 83–89 (YCVRQDE) and 228–229 (GC). Aspartate 230 and aspartate 232 together coordinate Mg(2+). In terms of domain architecture, PAP-associated spans 427 to 463 (SLSELLLQFFEFYSQFDFHNRAISLNEGKPLSKPDHS). Disordered stretches follow at residues 555–574 (AGATSSSTPPTPAITYKSAS) and 588–612 (SELKQLRGSGSSVPTSSPNNRRRSR).

Belongs to the DNA polymerase type-B-like family. It depends on Mg(2+) as a cofactor. Requires Mn(2+) as cofactor.

It is found in the mitochondrion. The catalysed reaction is RNA(n) + ATP = RNA(n)-3'-adenine ribonucleotide + diphosphate. In terms of biological role, polymerase that creates the 3' poly(A) tail of mitochondrial transcripts. This is not required for transcript stability or translation but may maintain mRNA integrity by protecting 3' termini from degradation. The sequence is that of Poly(A) RNA polymerase, mitochondrial from Drosophila melanogaster (Fruit fly).